A 920-amino-acid polypeptide reads, in one-letter code: Probable helicase HelY (920 aa).

The Helicase ATP-binding domain maps to 26-184 (CAALERGHGV…WVQTVRGDTT (159 aa)). 39–46 (APTGAGKT) contacts ATP. A DEVH box motif is present at residues 132-135 (DEVH). A Helicase C-terminal domain is found at 265–469 (EVIAILDAEG…SYNMTINLVH (205 aa)).

Belongs to the helicase family. SKI2 subfamily.

The chain is Probable helicase HelY (helY) from Mycobacterium leprae (strain TN).